Here is a 440-residue protein sequence, read N- to C-terminus: MESQQLSQHSPISHGSACASVTSKEVQTTQDPLDISASKTEECEKVSTQANSQQPTTPLSSAVPENHHHASPQAAQVPLPQNGPYPQQRMMNTQQANISGWPVYGHPSLMPYPPYQMSPMYAPPGAQSQFTQYPQYVGTHLNTPSPESGNSFPDSSSAKSNMTSTNQHVRPPPILTSPNDFLNWVKIYIKFLQNSNLGDIIPTATRKAVRQMTDDELTFLCHTFQLFAPSQFLPPWVKDILSVDYTDIMKILSKSINKMQSDTQEVNDITTLATLHYNGSTPADAFEAEVTNILDRLNNNGIPINNKVACQFIMRGLSGEYKFLRYARHRCIHMTVADLFSDIHSMYEEQQESKRNKSTHRRSPSDEKKDSRTYTNTTKPKSITRNSQKPNNSQSRTARAHNVSTFNNSPGPDNDLIRGSTTEPIQLKNTHDLHLRPGTY.

3 stretches are compositionally biased toward polar residues: residues 1–31 (MESQ…TTQD), 46–60 (VSTQ…TPLS), and 137–168 (VGTH…TNQH). 3 disordered regions span residues 1 to 88 (MESQ…YPQQ), 137 to 174 (VGTH…PPPI), and 350 to 424 (QQES…TTEP). The RNA-binding stretch occupies residues 299–401 (NNGIPINNKV…NSQSRTARAH (103 aa)). A compositionally biased stretch (basic and acidic residues) spans 363–372 (SPSDEKKDSR). A compositionally biased stretch (polar residues) spans 373–411 (TYTNTTKPKSITRNSQKPNNSQSRTARAHNVSTFNNSPG).

In terms of assembly, homotrimer.

Its subcellular location is the cytoplasm. Capsid protein (CA) is the structural component of the virus-like particle (VLP), forming the shell that encapsulates the retrotransposons dimeric RNA genome. The particles are assembled from trimer-clustered units and there are holes in the capsid shells that allow for the diffusion of macromolecules. CA also has nucleocapsid-like chaperone activity, promoting primer tRNA(i)-Met annealing to the multipartite primer-binding site (PBS), dimerization of Ty1 RNA and initiation of reverse transcription. This is Transposon Ty1-MR1 Gag polyprotein (TY1A-MR1) from Saccharomyces cerevisiae (strain ATCC 204508 / S288c) (Baker's yeast).